The sequence spans 365 residues: Glycosyltransferase 8 domain-containing protein 1 (365 aa).

The Cytoplasmic segment spans residues M1–R4. A helical; Signal-anchor for type II membrane protein membrane pass occupies residues R5–L22. Residues H23–K365 lie on the Lumenal side of the membrane. Residues N102, N181, N245, and N253 are each glycosylated (N-linked (GlcNAc...) asparagine).

Belongs to the glycosyltransferase 8 family.

Its subcellular location is the membrane. This is Glycosyltransferase 8 domain-containing protein 1 (glt8d1) from Danio rerio (Zebrafish).